The sequence spans 528 residues: U3 small nucleolar RNA-associated protein 15 homolog (528 aa).

Residue A2 is modified to N-acetylalanine. WD repeat units follow at residues 36 to 75 (KEFG…PVKT), 78 to 117 (RFKD…PLRQ), 120 to 159 (GHTK…EILT), 162 to 202 (EHSD…NVLC), 204 to 242 (EHGQ…QLLV), 246 to 285 (NHHK…VVHS), and 287 to 326 (DYAA…KKES). A Glycyl lysine isopeptide (Lys-Gly) (interchain with G-Cter in SUMO2) cross-link involves residue K249. The segment at 508–528 (AELPEEKTESPRQPSDTDKNS) is disordered. The segment covering 511 to 528 (PEEKTESPRQPSDTDKNS) has biased composition (basic and acidic residues).

As to quaternary structure, part of the small subunit (SSU) processome, composed of more than 70 proteins and the RNA chaperone small nucleolar RNA (snoRNA) U3. May be a component of the proposed t-UTP subcomplex of the ribosomal small subunit (SSU) processome containing at least UTP4, WDR43, HEATR1, UTP15, WDR75. Interacts directly with UTP4 and WDR43.

The protein localises to the nucleus. The protein resides in the nucleolus. In terms of biological role, ribosome biogenesis factor. Involved in nucleolar processing of pre-18S ribosomal RNA. Required for optimal pre-ribosomal RNA transcription by RNA polymerase I. Part of the small subunit (SSU) processome, first precursor of the small eukaryotic ribosomal subunit. During the assembly of the SSU processome in the nucleolus, many ribosome biogenesis factors, an RNA chaperone and ribosomal proteins associate with the nascent pre-rRNA and work in concert to generate RNA folding, modifications, rearrangements and cleavage as well as targeted degradation of pre-ribosomal RNA by the RNA exosome. The sequence is that of U3 small nucleolar RNA-associated protein 15 homolog from Rattus norvegicus (Rat).